A 385-amino-acid chain; its full sequence is Meiotic recombination protein SPO11-2 (385 aa).

The 146-residue stretch at 24-169 (LPPAEVRARI…LGIMASSRGA (146 aa)) folds into the Topo IIA-type catalytic domain. Tyrosine 126 (O-(5'-phospho-DNA)-tyrosine intermediate) is an active-site residue. Mg(2+) contacts are provided by glutamate 219 and aspartate 272.

The protein belongs to the TOP6A family. In terms of assembly, interacts with TOP6B. Mg(2+) serves as cofactor. In terms of tissue distribution, highly expressed in flowers before pollination. Expressed in roots and shoots.

The protein resides in the nucleus. The catalysed reaction is ATP-dependent breakage, passage and rejoining of double-stranded DNA.. In terms of biological role, required for meiotic recombination. Mediates DNA cleavage that forms the double-strand breaks (DSB) that initiate meiotic recombination. This is Meiotic recombination protein SPO11-2 (SPO11-2) from Oryza sativa subsp. indica (Rice).